We begin with the raw amino-acid sequence, 564 residues long: Juvenile hormone esterase (564 aa).

Residues 1–19 (MTSHVLALAFLLHACTALA) form the signal peptide. Residue asparagine 81 is glycosylated (N-linked (GlcNAc...) asparagine). Cysteine 89 and cysteine 109 form a disulfide bridge. Asparagine 180 carries an N-linked (GlcNAc...) asparagine glycan. Serine 220 acts as the Acyl-ester intermediate in catalysis. The Charge relay system role is filled by glutamate 351. Asparagine 402 carries N-linked (GlcNAc...) asparagine glycosylation. Histidine 465 acts as the Charge relay system in catalysis. N-linked (GlcNAc...) asparagine glycosylation occurs at asparagine 515.

It belongs to the type-B carboxylesterase/lipase family.

The enzyme catalyses juvenile hormone I + H2O = juvenile hormone I carboxylate + methanol + H(+). The catalysed reaction is juvenile hormone III + H2O = juvenile hormone III carboxylate + methanol + H(+). In terms of biological role, JH esterase plays a crucial role in the decrease of JH activity in lepidopteran insects, by hydrolyzing the methyl ester of JH. It is also involved in the transport of JH. In Heliothis virescens (Tobacco budworm moth), this protein is Juvenile hormone esterase.